We begin with the raw amino-acid sequence, 229 residues long: MNVEEMKKAVAKEALKFIEDEMVVGLGTGSTTAYFINYLGKLLMEGELEDVYGVPTSHQARLLALEAGIPVVSLDEVDAIDIAVDGADEVDPHMNLIKGRGAALTMEKIIEYRAGMFIVLVDESKLVEYLGQKMPVPIEVIPAAWRAIAEELEVFNATAELRMAVKKDGPVVTDNGNFILDAKFARIEDPLDLEIELNTIPGVVENGIFADIADIILVGTPEGVKRMER.

Residues 28–31 (TGST), 85–88 (DGAD), and 98–101 (KGRG) contribute to the substrate site. The active-site Proton acceptor is Glu-107. Lys-125 contributes to the substrate binding site.

This sequence belongs to the ribose 5-phosphate isomerase family. As to quaternary structure, homodimer.

The enzyme catalyses aldehydo-D-ribose 5-phosphate = D-ribulose 5-phosphate. It functions in the pathway carbohydrate degradation; pentose phosphate pathway; D-ribose 5-phosphate from D-ribulose 5-phosphate (non-oxidative stage): step 1/1. Its function is as follows. Catalyzes the reversible conversion of ribose-5-phosphate to ribulose 5-phosphate. This is Ribose-5-phosphate isomerase A from Thermococcus kodakarensis (strain ATCC BAA-918 / JCM 12380 / KOD1) (Pyrococcus kodakaraensis (strain KOD1)).